A 423-amino-acid chain; its full sequence is Large ribosomal subunit protein mL37 (423 aa).

The N-terminal 29 residues, 1-29 (MALASGPAMRALAGSARLGLGGYGAPKRG), are a transit peptide targeting the mitochondrion.

The protein belongs to the mitochondrion-specific ribosomal protein mL37 family. As to quaternary structure, component of the mitochondrial ribosome large subunit (39S) which comprises a 16S rRNA and about 50 distinct proteins.

Its subcellular location is the mitochondrion. The protein is Large ribosomal subunit protein mL37 (Mrpl37) of Rattus norvegicus (Rat).